A 664-amino-acid polypeptide reads, in one-letter code: MKRRNADCSKLRRPLKRNRITEGIYGSTFLYLKFLVVWALVLLADFVLEFRFEYLWPFWLFIRSVYDSFRYQGLAFSVFFVCVAFTSNIICLLFIPIQWLFFAASTYVWVQYVWHTERGVCLPTVSLWILFVYIEAAIRFKDLKNFHVDLCRPFAAHCIGYPVVTLGFGFKSYVSYKMRLRKQKEVQKENEFYMQLLQQALPPEQQMLQKQEKEAEEAAKGLPDMDSSILIHHNGGIPANKKLSTTLPEIEYREKGKEKDKDAKKHNLGINNNNILQPVDSKIQEIEYMENHINSKRLNNDLVGSTENLLKEDSCTASSKNYKNASGVVNSSPRSHSATNGSIPSSSSKNEKKQKCTSKGPSAHKDLMENCIPNNQLSKPDALVRLEQDIKKLKADLQASRQVEQELRSQISALSSTERGIRSEMGQLRQENELLQNKLHNAVQMKQKDKQNISQLEKKLKAEQEARSFVEKQLMEEKKRKKLEEATAARAVAFAAASRGECTETLRSRIRELEAEGKKLTMDMKVKEEQIRELELKVQELRKYKENEKDTEVLMSALSAMQDKTQHLENSLSAETRIKLDLFSALGDAKRQLEIAQGQILQKDQEIKDLKQKIAEVMAVMPSITYSAATSPLSPVSPHYSSKFVETSPSGLDPNASVYQPLKK.

4 helical membrane-spanning segments follow: residues 28–48 (TFLYLKFLVVWALVLLADFVL), 75–95 (AFSVFFVCVAFTSNIICLLFI), 120–140 (VCLPTVSLWILFVYIEAAIRF), and 154–174 (FAAHCIGYPVVTLGFGFKSYV). A compositionally biased stretch (basic and acidic residues) spans 253-265 (REKGKEKDKDAKK). The tract at residues 253-274 (REKGKEKDKDAKKHNLGINNNN) is disordered. Position 305 is a phosphoserine (serine 305). Residues 320-348 (KNYKNASGVVNSSPRSHSATNGSIPSSSS) are compositionally biased toward polar residues. Positions 320 to 375 (KNYKNASGVVNSSPRSHSATNGSIPSSSSKNEKKQKCTSKGPSAHKDLMENCIPNN) are disordered. A glycan (N-linked (GlcNAc...) asparagine) is linked at asparagine 324. A Phosphoserine modification is found at serine 332. 2 N-linked (GlcNAc...) asparagine glycosylation sites follow: asparagine 340 and asparagine 452. The segment at 630–664 (TSPLSPVSPHYSSKFVETSPSGLDPNASVYQPLKK) is disordered. 2 positions are modified to phosphoserine: serine 631 and serine 634. N-linked (GlcNAc...) asparagine glycosylation is present at asparagine 655.

It belongs to the macoilin family. As to expression, strong expression in whole nervous system up to 12.5 dpc. Highly expressed in all neuronal differentiation fields from 14.5 dpc to birth, with highest expression in the telencephalic cortical plate and mitral cells in the olfactory bulb, and lower expression in neuronal progenitor zones. Progressively decreased expression in fields of neuron precursor proliferation from 14.5 dpc and virtually undetectable there by 17.5 dpc. No significant expression detected outside the nervous system. After birth, significant expression remains in the cerebellum, olfactory bulb and hippocampus.

Its subcellular location is the rough endoplasmic reticulum membrane. It is found in the nucleus membrane. Its function is as follows. Plays a role in the regulation of neuronal activity. The polypeptide is Macoilin (Maco1) (Mus musculus (Mouse)).